The following is a 172-amino-acid chain: DNA-directed RNA polymerase II subunit rpb7 (172 aa).

Belongs to the eukaryotic RPB7/RPC8 RNA polymerase subunit family. In terms of assembly, component of the RNA polymerase II (Pol II) complex consisting of 12 subunits. RPB4 and RPB7 form a subcomplex that protrudes from the 10-subunit Pol II core complex.

It is found in the nucleus. Functionally, DNA-dependent RNA polymerase catalyzes the transcription of DNA into RNA using the four ribonucleoside triphosphates as substrates. Component of RNA polymerase II which synthesizes mRNA precursors and many functional non-coding RNAs. Pol II is the central component of the basal RNA polymerase II transcription machinery. It is composed of mobile elements that move relative to each other. RPB7 is part of a subcomplex with RPB4 that binds to a pocket formed by RPB1, RPB2 and RPB6 at the base of the clamp element. The RPB4-RPB7 subcomplex seems to lock the clamp via RPB7 in the closed conformation thus preventing double-stranded DNA to enter the active site cleft. The RPB4-RPB7 subcomplex binds single-stranded DNA and RNA. This chain is DNA-directed RNA polymerase II subunit rpb7 (polr2g), found in Dictyostelium discoideum (Social amoeba).